A 600-amino-acid chain; its full sequence is Aspartate--tRNA(Asp/Asn) ligase (600 aa).

L-aspartate is bound at residue E174. The tract at residues 198 to 201 (QLFK) is aspartate. R220 is an L-aspartate binding site. ATP contacts are provided by residues 220 to 222 (RDE) and Q229. H457 serves as a coordination point for L-aspartate. E491 serves as a coordination point for ATP. Residue R498 coordinates L-aspartate. An ATP-binding site is contributed by 543–546 (GLDR).

It belongs to the class-II aminoacyl-tRNA synthetase family. Type 1 subfamily. Homodimer.

The protein resides in the cytoplasm. It carries out the reaction tRNA(Asx) + L-aspartate + ATP = L-aspartyl-tRNA(Asx) + AMP + diphosphate. In terms of biological role, aspartyl-tRNA synthetase with relaxed tRNA specificity since it is able to aspartylate not only its cognate tRNA(Asp) but also tRNA(Asn). Reaction proceeds in two steps: L-aspartate is first activated by ATP to form Asp-AMP and then transferred to the acceptor end of tRNA(Asp/Asn). The sequence is that of Aspartate--tRNA(Asp/Asn) ligase from Burkholderia lata (strain ATCC 17760 / DSM 23089 / LMG 22485 / NCIMB 9086 / R18194 / 383).